Here is a 764-residue protein sequence, read N- to C-terminus: MTTAHILGFPRIGAQRELKFALERYWRDGASADAERALVDTGRALRAAHWQTQRDAGLDCVTVGDFAWYDHVLTTLAHVGGLPRRFGFDARALTLADYFAAARGNAAQPAMEMTKWFDTNYHYLVPEYSPATTFGPGVEWLFDEVREARALGHRPKAALVGPLTLLWLGKARDGLADRLELLPRLVPAYRALLARLREAGVDWVQIDEPIFALDLPAAWRDAARPAYEALVPGAPKLLVATYFDDVSEHAALLKALPVAGLHVDLVRGDAQLDAFVADYPADKVLSCGIVDGRNVWRNDLDRSLARLAPVHETLGERLWIATSCSLLHAPVDLAHEPKLDDELKAWLAFAVQKTREVAALRDALAKGRAAVAAEFDAAAVAAAARRTSARIHNPLVKRRVAALTDADARRASAYPARAAAQRARFDLPPLPTTTIGSFPQTPEIRRARAAFRQGVLDHLGYLEAMREQVRIAIDKQLSYGLDVLVHGEAERNDMVEYFGELMWGFAITSNGWVQSYGSRCVKPPLVYGDVYLPEPMTVGWASYAQSLTTKPVKGMLTGPVTMLQWSFVRDDQPRATTALQIALALRQETLDLEKAGIGMIQVDEPALREGLPLKARDRAEYLDWAVRAFRIAASGVADDTQIHTHMCYSEFGDILPSIAALDADVISIETTRSNMELLDAFETFEYPNEIGPGVYDIHSPRVPDADEIERLILLALERIPAQRLWVNPDCGLKTREWRQVDAALAAMVDAAKRVRQTVEQAVPA.

5-methyltetrahydropteroyltri-L-glutamate is bound by residues 16–19 (RELK) and Lys115. Residues 435–437 (IGS) and Glu488 contribute to the L-homocysteine site. L-methionine is bound by residues 435-437 (IGS) and Glu488. Residues 519-520 (RC) and Trp565 each bind 5-methyltetrahydropteroyltri-L-glutamate. L-homocysteine is bound at residue Asp603. Asp603 is an L-methionine binding site. Glu609 provides a ligand contact to 5-methyltetrahydropteroyltri-L-glutamate. Residues His645, Cys647, and Glu669 each contribute to the Zn(2+) site. His698 serves as the catalytic Proton donor. Cys730 contacts Zn(2+).

Belongs to the vitamin-B12 independent methionine synthase family. Requires Zn(2+) as cofactor.

The enzyme catalyses 5-methyltetrahydropteroyltri-L-glutamate + L-homocysteine = tetrahydropteroyltri-L-glutamate + L-methionine. It functions in the pathway amino-acid biosynthesis; L-methionine biosynthesis via de novo pathway; L-methionine from L-homocysteine (MetE route): step 1/1. In terms of biological role, catalyzes the transfer of a methyl group from 5-methyltetrahydrofolate to homocysteine resulting in methionine formation. The polypeptide is 5-methyltetrahydropteroyltriglutamate--homocysteine methyltransferase (Burkholderia thailandensis (strain ATCC 700388 / DSM 13276 / CCUG 48851 / CIP 106301 / E264)).